The chain runs to 136 residues: MLQPKRTKFRKMHKGRNRGLAQGTDVSFGEFGLKACGRCRLTARQIEAARRAMTRAIKRQGKVWIRVFPDKPITEKPLEVRMGKGKGNVEYWVALIQPGKVLFEMAGVPEETAREAFKLAAAKLPVGTTFVTKTVM.

This sequence belongs to the universal ribosomal protein uL16 family. As to quaternary structure, part of the 50S ribosomal subunit.

Functionally, binds 23S rRNA and is also seen to make contacts with the A and possibly P site tRNAs. The chain is Large ribosomal subunit protein uL16 from Yersinia enterocolitica serotype O:8 / biotype 1B (strain NCTC 13174 / 8081).